The sequence spans 424 residues: Gamma-glutamyl phosphate reductase (424 aa).

Belongs to the gamma-glutamyl phosphate reductase family.

Its subcellular location is the cytoplasm. The enzyme catalyses L-glutamate 5-semialdehyde + phosphate + NADP(+) = L-glutamyl 5-phosphate + NADPH + H(+). It participates in amino-acid biosynthesis; L-proline biosynthesis; L-glutamate 5-semialdehyde from L-glutamate: step 2/2. Catalyzes the NADPH-dependent reduction of L-glutamate 5-phosphate into L-glutamate 5-semialdehyde and phosphate. The product spontaneously undergoes cyclization to form 1-pyrroline-5-carboxylate. The chain is Gamma-glutamyl phosphate reductase from Dehalococcoides mccartyi (strain CBDB1).